The primary structure comprises 972 residues: Isoleucine--tRNA ligase (972 aa).

The 'HIGH' region signature appears at 63 to 73; it reads PYANGNIHIGH. Glu-603 contributes to the L-isoleucyl-5'-AMP binding site. The short motif at 644–648 is the 'KMSKS' region element; the sequence is KMSKS. ATP is bound at residue Lys-647.

It belongs to the class-I aminoacyl-tRNA synthetase family. IleS type 1 subfamily. As to quaternary structure, monomer.

Its subcellular location is the cytoplasm. It catalyses the reaction tRNA(Ile) + L-isoleucine + ATP = L-isoleucyl-tRNA(Ile) + AMP + diphosphate. Catalyzes the attachment of isoleucine to tRNA(Ile). As IleRS can inadvertently accommodate and process structurally similar amino acids such as valine, to avoid such errors it has two additional distinct tRNA(Ile)-dependent editing activities. One activity is designated as 'pretransfer' editing and involves the hydrolysis of activated Val-AMP. The other activity is designated 'posttransfer' editing and involves deacylation of mischarged Val-tRNA(Ile). This chain is Isoleucine--tRNA ligase, found in Brucella abortus (strain 2308).